A 393-amino-acid chain; its full sequence is S-adenosylmethionine synthase (393 aa).

H16 lines the ATP pocket. D18 contributes to the Mg(2+) binding site. Position 44 (E44) interacts with K(+). Residues E57 and Q100 each coordinate L-methionine. Positions 100 to 110 are flexible loop; that stretch reads QSNDIAQGVDH. ATP contacts are provided by residues 167–169, 238–239, D247, 253–254, A270, and K274; these read DAK, RF, and RK. D247 provides a ligand contact to L-methionine. K278 provides a ligand contact to L-methionine.

It belongs to the AdoMet synthase family. As to quaternary structure, homotetramer; dimer of dimers. Requires Mg(2+) as cofactor. K(+) serves as cofactor.

The protein localises to the cytoplasm. It carries out the reaction L-methionine + ATP + H2O = S-adenosyl-L-methionine + phosphate + diphosphate. Its pathway is amino-acid biosynthesis; S-adenosyl-L-methionine biosynthesis; S-adenosyl-L-methionine from L-methionine: step 1/1. In terms of biological role, catalyzes the formation of S-adenosylmethionine (AdoMet) from methionine and ATP. The overall synthetic reaction is composed of two sequential steps, AdoMet formation and the subsequent tripolyphosphate hydrolysis which occurs prior to release of AdoMet from the enzyme. This chain is S-adenosylmethionine synthase, found in Leptothrix cholodnii (strain ATCC 51168 / LMG 8142 / SP-6) (Leptothrix discophora (strain SP-6)).